The primary structure comprises 122 residues: LOB domain-containing protein 5 (122 aa).

The 102-residue stretch at 8 to 109 (RPCSVCITKN…AYLRELQEKI (102 aa)) folds into the LOB domain.

It belongs to the LOB domain-containing protein family.

The protein is LOB domain-containing protein 5 (LBD5) of Arabidopsis thaliana (Mouse-ear cress).